Here is a 456-residue protein sequence, read N- to C-terminus: Argininosuccinate lyase (456 aa).

It belongs to the lyase 1 family. Argininosuccinate lyase subfamily.

It localises to the cytoplasm. It carries out the reaction 2-(N(omega)-L-arginino)succinate = fumarate + L-arginine. It participates in amino-acid biosynthesis; L-arginine biosynthesis; L-arginine from L-ornithine and carbamoyl phosphate: step 3/3. This chain is Argininosuccinate lyase, found in Carboxydothermus hydrogenoformans (strain ATCC BAA-161 / DSM 6008 / Z-2901).